A 59-amino-acid polypeptide reads, in one-letter code: Large ribosomal subunit protein uL30 (59 aa).

The protein belongs to the universal ribosomal protein uL30 family. In terms of assembly, part of the 50S ribosomal subunit.

The sequence is that of Large ribosomal subunit protein uL30 from Brachyspira hyodysenteriae (strain ATCC 49526 / WA1).